Here is a 203-residue protein sequence, read N- to C-terminus: MFKKYDSKNSIVLKSILSLGIIYSGSFGIYPKADASTQNSSSVQDKQLQKVEEVPNNSEKALVKKLYDRYSKDTINGKSNKSRNWVYSERPLNENQVRIHLEGTYTVAGRVYTPKRNITLNKEVVTLKELDHIIRFAHISYGLYMGEHLPKGNIVINTKNGGKYTLESHKELQKNRENVEINTDDIKNVTFELVKSVNDIEQV.

Positions 164–180 are sialic acid-binding motif; it reads YTLESHKELQKNRENVE.

This sequence belongs to the staphylococcal/streptococcal toxin family.

It localises to the secreted. Its function is as follows. Plays a role in the inhibition of the host innate immune system. Inhibits phagocytosis and killing by human neutrophils by interacting with multiple neutrophil surface glycoproteins in a sialic acid-dependent manner. This Staphylococcus aureus protein is Enterotoxin-like toxin X.